The following is a 229-amino-acid chain: Large ribosomal subunit protein uL1 (229 aa).

This sequence belongs to the universal ribosomal protein uL1 family. Part of the 50S ribosomal subunit.

Functionally, binds directly to 23S rRNA. The L1 stalk is quite mobile in the ribosome, and is involved in E site tRNA release. Protein L1 is also a translational repressor protein, it controls the translation of the L11 operon by binding to its mRNA. This chain is Large ribosomal subunit protein uL1, found in Actinobacillus succinogenes (strain ATCC 55618 / DSM 22257 / CCUG 43843 / 130Z).